The sequence spans 406 residues: Nuclear hormone receptor family member nhr-133 (406 aa).

Positions 8-83 form a DNA-binding region, nuclear receptor; the sequence is SGPCEICEQP…VGMNSSKFQN (76 aa). The NR C4-type zinc-finger motif lies at 11-31; it reads CEICEQPAHGNHFGVLSCRAC. Residues 47 to 66 form an NR C4-type; degenerate zinc finger; that stretch reads DRVCRKGNCIGNDLYRCKIC. An NR LBD domain is found at 150 to 406; the sequence is YSWSPNHYPN…YSHPEMFEFS (257 aa).

Belongs to the nuclear hormone receptor family.

It is found in the nucleus. Its function is as follows. Orphan nuclear receptor. The polypeptide is Nuclear hormone receptor family member nhr-133 (Caenorhabditis elegans).